Here is a 205-residue protein sequence, read N- to C-terminus: MYIFQADQLSAKDTYKLLSGTVIPRPIAFVTTLSSGGAVNAAPFSFYNVVSSDPPLLSISVNRTEGRQKDTARNAVENGEFVVHVSDEAIIEDINETAASLRPDESELTRTSLHPVESKAVSVPGIKEARVRFECKLERHITFDNDQGITTADLLIGRVVCFHLDEKVYDAEKGYILTDELKPASRLAGNHYAKLGEEFTLIRPS.

The protein belongs to the flavoredoxin family. It depends on FMN as a cofactor.

This is an uncharacterized protein from Bacillus subtilis (strain 168).